The chain runs to 32 residues: Snake venom serine proteinase (32 aa).

The region spanning 1-32 (VIGGDECDINEHRFLVFLTXASGLACGGTLIN) is the Peptidase S1 domain.

Belongs to the peptidase S1 family. Snake venom subfamily. In terms of assembly, monomer. In terms of processing, contains 6 disulfide bonds. Post-translationally, glycosylated. In terms of tissue distribution, expressed by the venom gland.

Its subcellular location is the secreted. Functionally, cleaves a kininogen analog with the release of kallidin (lysyl-bradykinin). Completely cleaves fibrinogen Aalpha chain, partially cleaves Bbeta chain and has no activity on gamma chain. The protein is Snake venom serine proteinase of Bitis arietans (African puff adder).